The sequence spans 252 residues: MYLHDVWVNWFEGEENGYNVCHFHEWRKEDTIELLDQVPLLYISKELLHYIENDMHDLPKSLLDTIYKRGYTRKGQKRTVVEYAAVVTDGDNILAFDTVGYYIPIRKSRLIPRQEQLVYDMIENNKPQNFEFDNKIHDKEYHMLSMPPEYVFGLTRKERQLKQLLMIGLDQLRTTNNKEELRYWLTEWDPKQYPSIRYMDEEQVWTALYDGVKHGWSSAHEDLCSKLIRGQAFLERMWEAEMGNEQHTSNQK.

Belongs to the UPF0736 family.

In Oceanobacillus iheyensis (strain DSM 14371 / CIP 107618 / JCM 11309 / KCTC 3954 / HTE831), this protein is UPF0736 protein OB1207.